The primary structure comprises 464 residues: Molybdate transporter 2 (464 aa).

A Tonoplast targeting signal motif is present at residues 8-9 (LL). 9 helical membrane-spanning segments follow: residues 33-53 (LSGAVGDLGTFIPIVLTLTLV), 62-82 (LIFTGFYNIATGLLFDIPMPV), 116-136 (LLLGATGAMSFLYNIIPLPVV), 172-192 (IWLGLDGLILALAALLFIILS), 223-243 (LLSSIPSALIVFALGLVLCFI), 309-329 (VSISVGVMNLIGCWFGAMPVC), 348-368 (SVIFLGIGKLIVGLVFGNSFV), 374-394 (FPIGILGVLLLFAGIELAMAS), and 404-424 (FIMLVCAAVSMTGSSAALGFG).

This sequence belongs to the SLC26A/SulP transporter (TC 2.A.53) family. In terms of tissue distribution, expressed in leaves. Not detected in roots, shoots and seeds.

The protein resides in the vacuole membrane. Functionally, molybdate transporter required for vacuolar molybdate export during senescence. The sequence is that of Molybdate transporter 2 (MOT2) from Arabidopsis thaliana (Mouse-ear cress).